Here is a 432-residue protein sequence, read N- to C-terminus: Adenylosuccinate synthetase (432 aa).

Residues 13–19 (GDEGKGK) and 41–43 (GHT) each bind GTP. Aspartate 14 functions as the Proton acceptor in the catalytic mechanism. 2 residues coordinate Mg(2+): aspartate 14 and glycine 41. Residues 14–17 (DEGK), 39–42 (NAGH), threonine 130, arginine 144, glutamine 225, threonine 240, and arginine 304 contribute to the IMP site. Histidine 42 (proton donor) is an active-site residue. Residue 300 to 306 (ATTGRKR) coordinates substrate. Residues arginine 306, 332-334 (KLD), and 415-417 (STG) contribute to the GTP site.

It belongs to the adenylosuccinate synthetase family. Homodimer. Requires Mg(2+) as cofactor.

The protein localises to the cytoplasm. It carries out the reaction IMP + L-aspartate + GTP = N(6)-(1,2-dicarboxyethyl)-AMP + GDP + phosphate + 2 H(+). It participates in purine metabolism; AMP biosynthesis via de novo pathway; AMP from IMP: step 1/2. In terms of biological role, plays an important role in the de novo pathway of purine nucleotide biosynthesis. Catalyzes the first committed step in the biosynthesis of AMP from IMP. The chain is Adenylosuccinate synthetase from Photobacterium profundum (strain SS9).